Reading from the N-terminus, the 248-residue chain is 1,2-phenylacetyl-CoA epoxidase, subunit C (248 aa).

Substrate-binding positions include 76–79 and 177–179; these read QFSN and IAL.

Forms a stable heterotetramer (dimer of heterodimers) with PaaA and a stable heterodimer with PaaB.

Its pathway is aromatic compound metabolism; phenylacetate degradation. Functionally, component of 1,2-phenylacetyl-CoA epoxidase multicomponent enzyme system which catalyzes the reduction of phenylacetyl-CoA (PA-CoA) to form 1,2-epoxyphenylacetyl-CoA. The subunit C may be essential for structural integrity of the alpha subunit. The polypeptide is 1,2-phenylacetyl-CoA epoxidase, subunit C (paaC) (Escherichia coli (strain K12)).